The primary structure comprises 64 residues: MAATAVRPITGMLRRGLILDIGIALGVGFVMANGYWYGYHMPRTNARDNYYKKLEEERAARMGA.

The Mitochondrial matrix segment spans residues 1 to 15; the sequence is MAATAVRPITGMLRR. The chain crosses the membrane as a helical span at residues 16–36; the sequence is GLILDIGIALGVGFVMANGYW. The Mitochondrial intermembrane segment spans residues 37–64; sequence YGYHMPRTNARDNYYKKLEEERAARMGA.

This sequence belongs to the fungal cytochrome c oxidase subunit 7a family. In terms of assembly, component of the cytochrome c oxidase (complex IV, CIV), a multisubunit enzyme composed of 11 subunits. The complex is composed of a catalytic core of 3 subunits Cox1, Cox2 and Cox3, encoded in the mitochondrial DNA, and 8 supernumerary subunits Cox4, Cox5a/Cox5, Cox6, Cox7, Cox8, Cox7a/Cox9, Cox6b/Cox12 and Cox6a/Cox13, which are encoded in the nuclear genome. The complex exists as a monomer or a dimer and forms respiratory supercomplexes (SCs) in the inner mitochondrial membrane with NADH-ubiquinone oxidoreductase (complex I, CI) and ubiquinol-cytochrome c oxidoreductase (cytochrome b-c1 complex, complex III, CIII), resulting in various different assemblies (supercomplexes I(1)IV(1), I(1)III(3)IV(2), III(2)IV(1) and III(2)IV(2) as well as larger supercomplexes of compositions like I(1)III(2)IV(5-6)).

The protein localises to the mitochondrion inner membrane. It participates in energy metabolism; oxidative phosphorylation. In terms of biological role, component of the cytochrome c oxidase, the last enzyme in the mitochondrial electron transport chain which drives oxidative phosphorylation. The respiratory chain contains 3 multisubunit complexes succinate dehydrogenase (complex II, CII), ubiquinol-cytochrome c oxidoreductase (cytochrome b-c1 complex, complex III, CIII) and cytochrome c oxidase (complex IV, CIV), that cooperate to transfer electrons derived from NADH and succinate to molecular oxygen, creating an electrochemical gradient over the inner membrane that drives transmembrane transport and the ATP synthase. Cytochrome c oxidase is the component of the respiratory chain that catalyzes the reduction of oxygen to water. Electrons originating from reduced cytochrome c in the intermembrane space (IMS) are transferred via the dinuclear copper A center (CU(A)) of Cox2 and heme A of Cox1 to the active site in Cox1, a binuclear center (BNC) formed by heme A3 and copper B (CU(B)). The BNC reduces molecular oxygen to 2 water molecules using 4 electrons from cytochrome c in the IMS and 4 protons from the mitochondrial matrix. This is Cytochrome c oxidase subunit 9, mitochondrial (cox-17) from Neurospora crassa (strain ATCC 24698 / 74-OR23-1A / CBS 708.71 / DSM 1257 / FGSC 987).